Reading from the N-terminus, the 344-residue chain is MLSLKLPQLLQVHQVPRVFWEDGIMSGYRRPTSSALDCVLSSFQMTNETVNIWTHFLPTWYFLWRLLALAGGPGFRAEPYHWPLLVFLLPACLYPFASCCAHTFSSMSPRMRHICYFLDYGALSLYSLGCAFPYAAYSMPASWLHGHLHQFFVPAAALNSFLCTGLSCYSRFLELESPGLSKVLRTGAFAYPFLFDNLPLFYRLGLCWGRGHGCGQEALSTSHGYHLFCALLTGFLFASHLPERLAPGRFDYIGHSHQLFHICAVLGTHFQLEAVLADMGSRRAWLATQEPALGLAGTVATLVLAAAGNLLIIAAFTATLLRAPSTCPLLQGGPLEGGTQAKQQ.

Over 1-51 the chain is Cytoplasmic; the sequence is MLSLKLPQLLQVHQVPRVFWEDGIMSGYRRPTSSALDCVLSSFQMTNETVN. Residues 52–72 traverse the membrane as a helical segment; sequence IWTHFLPTWYFLWRLLALAGG. Residues 73-83 lie on the Extracellular side of the membrane; it reads PGFRAEPYHWP. Residues 84 to 104 traverse the membrane as a helical segment; the sequence is LLVFLLPACLYPFASCCAHTF. Over 105-113 the chain is Cytoplasmic; it reads SSMSPRMRH. A helical membrane pass occupies residues 114–134; it reads ICYFLDYGALSLYSLGCAFPY. Residues 135–147 are Extracellular-facing; sequence AAYSMPASWLHGH. The chain crosses the membrane as a helical span at residues 148-168; sequence LHQFFVPAAALNSFLCTGLSC. The Cytoplasmic portion of the chain corresponds to 169-217; that stretch reads YSRFLELESPGLSKVLRTGAFAYPFLFDNLPLFYRLGLCWGRGHGCGQE. The chain crosses the membrane as a helical span at residues 218-238; the sequence is ALSTSHGYHLFCALLTGFLFA. At 239–258 the chain is on the extracellular side; sequence SHLPERLAPGRFDYIGHSHQ. Residues 259–279 traverse the membrane as a helical segment; it reads LFHICAVLGTHFQLEAVLADM. The Cytoplasmic segment spans residues 280 to 292; that stretch reads GSRRAWLATQEPA. The chain crosses the membrane as a helical span at residues 293–313; it reads LGLAGTVATLVLAAAGNLLII. At 314–344 the chain is on the extracellular side; it reads AAFTATLLRAPSTCPLLQGGPLEGGTQAKQQ.

The protein belongs to the ADIPOR family. As to quaternary structure, homodimer. In terms of tissue distribution, brain specific. Highly expressed in the hypothalamus, also expressed in forebrain, amygdala, corpus callosum and spinal cord.

It localises to the cell membrane. Functionally, plasma membrane progesterone (P4) receptor coupled to G proteins. Seems to act through a G(s) mediated pathway. Involved in neurosteroid inhibition of apoptosis. May be involved in regulating rapid P4 signaling in the nervous system. Also binds dehydroepiandrosterone (DHEA), pregnanolone, pregnenolone and allopregnanolone. This chain is Membrane progestin receptor delta, found in Homo sapiens (Human).